The sequence spans 201 residues: FMN-dependent NADH:quinone oxidoreductase (201 aa).

FMN contacts are provided by residues Ser-10, Ser-16–Ser-18, Met-96–Phe-99, and Ser-140–Gly-143.

The protein belongs to the azoreductase type 1 family. In terms of assembly, homodimer. It depends on FMN as a cofactor.

The catalysed reaction is 2 a quinone + NADH + H(+) = 2 a 1,4-benzosemiquinone + NAD(+). It catalyses the reaction N,N-dimethyl-1,4-phenylenediamine + anthranilate + 2 NAD(+) = 2-(4-dimethylaminophenyl)diazenylbenzoate + 2 NADH + 2 H(+). Quinone reductase that provides resistance to thiol-specific stress caused by electrophilic quinones. Functionally, also exhibits azoreductase activity. Catalyzes the reductive cleavage of the azo bond in aromatic azo compounds to the corresponding amines. The protein is FMN-dependent NADH:quinone oxidoreductase of Yersinia pseudotuberculosis serotype O:1b (strain IP 31758).